A 62-amino-acid polypeptide reads, in one-letter code: Large ribosomal subunit protein uL30 (62 aa).

It belongs to the universal ribosomal protein uL30 family. As to quaternary structure, part of the 50S ribosomal subunit.

This Gluconobacter oxydans (strain 621H) (Gluconobacter suboxydans) protein is Large ribosomal subunit protein uL30.